We begin with the raw amino-acid sequence, 228 residues long: Large ribosomal subunit protein uL1 (228 aa).

Belongs to the universal ribosomal protein uL1 family. As to quaternary structure, part of the 50S ribosomal subunit.

In terms of biological role, binds directly to 23S rRNA. The L1 stalk is quite mobile in the ribosome, and is involved in E site tRNA release. Protein L1 is also a translational repressor protein, it controls the translation of the L11 operon by binding to its mRNA. In Clavibacter michiganensis subsp. michiganensis (strain NCPPB 382), this protein is Large ribosomal subunit protein uL1.